A 303-amino-acid polypeptide reads, in one-letter code: Glutathione transport system permease protein GsiD (303 aa).

6 helical membrane-spanning segments follow: residues 40–60 (AMTA…ARWI), 105–125 (LAAG…LGLL), 144–164 (LFAF…GSGI), 165–185 (ANVI…LVRG), 222–242 (IVVF…SLSF), and 266–286 (VIAP…VLAF). In terms of domain architecture, ABC transmembrane type-1 spans 101–290 (AQISLAAGVF…LTVLAFNLLG (190 aa)).

The protein belongs to the binding-protein-dependent transport system permease family. As to quaternary structure, the complex is composed of two ATP-binding proteins (GsiA), two transmembrane proteins (GsiC and GsiD) and a solute-binding protein (GsiB).

The protein localises to the cell inner membrane. Part of the ABC transporter complex GsiABCD involved in glutathione import. Probably responsible for the translocation of the substrate across the membrane. The chain is Glutathione transport system permease protein GsiD from Escherichia coli O6:K15:H31 (strain 536 / UPEC).